The sequence spans 563 residues: Arginine--tRNA ligase (563 aa).

Positions 134–144 (ANPTGLLHMGN) match the 'HIGH' region motif.

It belongs to the class-I aminoacyl-tRNA synthetase family. In terms of assembly, monomer.

It localises to the cytoplasm. It catalyses the reaction tRNA(Arg) + L-arginine + ATP = L-arginyl-tRNA(Arg) + AMP + diphosphate. In Heliobacterium modesticaldum (strain ATCC 51547 / Ice1), this protein is Arginine--tRNA ligase.